A 241-amino-acid chain; its full sequence is Nickel import ATP-binding protein LarO (241 aa).

An ABC transporter domain is found at 2 to 240 (IKLVNICYDY…QPARQAQLMT (239 aa)). ATP is bound at residue 34–41 (GPNGSGKS).

It belongs to the ABC transporter superfamily. As to quaternary structure, may form an energy-coupling factor (ECF) transporter complex composed of an ATP-binding protein (A component, LarO), a transmembrane protein (T component, LarQ) and a fused possible substrate-capture protein (S component, LarMN) of unknown stoichiometry.

It is found in the cell membrane. In terms of biological role, probable ATP-binding component of the energy-coupling factor (ECF) transporter complex LarMNQO involved in nickel import. LarO is presumably responsible for energy coupling to the transport system. This chain is Nickel import ATP-binding protein LarO, found in Lactiplantibacillus plantarum (strain ATCC BAA-793 / NCIMB 8826 / WCFS1) (Lactobacillus plantarum).